Reading from the N-terminus, the 100-residue chain is Cytochrome c2 iso-1 (100 aa).

Heme c-binding residues include Cys-11, Cys-14, His-15, and Met-76.

It belongs to the cytochrome c family. Post-translationally, binds 1 heme c group covalently per subunit.

Cytochrome c2 is found mainly in purple, non-sulfur, photosynthetic bacteria where it functions as the electron donor to the oxidized bacteriochlorophyll in the photophosphorylation pathway. However, it may also have a role in the respiratory chain and is found in some non-photosynthetic bacteria. This Magnetospirillum molischianum (Rhodospirillum molischianum) protein is Cytochrome c2 iso-1.